The sequence spans 320 residues: Melanocyte-stimulating hormone receptor (320 aa).

The Extracellular segment spans residues 1-40 (MPVLGPERRLLASLSSAPPAAPRLGLAANQTNQTGPQCLE). Residue Asn-32 is glycosylated (N-linked (GlcNAc...) asparagine). Residues 41–66 (VSIPDGLFLSLGLVSLVENVLVVAAI) traverse the membrane as a helical segment. The Cytoplasmic segment spans residues 67 to 75 (AKNRNLHSP). Residues 76-96 (MYYFVCCLAVSDLLVSVSNVL) traverse the membrane as a helical segment. Residues 97–121 (ETAVLLLLEAGALAAQAAVVQQLDN) lie on the Extracellular side of the membrane. Residues 122–143 (VMDVLICGSMVSSLCFLGAIAV) form a helical membrane-spanning segment. Residues 144–166 (DRYVSIFYALRYHSIVTLPRAGR) lie on the Cytoplasmic side of the membrane. A helical transmembrane segment spans residues 167–186 (AIAAIWAGSVLSSTLFIAYY). At 187 to 194 (HHTAVLLG) the chain is on the extracellular side. A helical transmembrane segment spans residues 195 to 214 (LVSFFVAMLALMAVLYVHML). Residues 215-243 (ARACQHGRHIARLHKTQHPTRQGCGLKGA) lie on the Cytoplasmic side of the membrane. The chain crosses the membrane as a helical span at residues 244–269 (ATLTILLGVFLLCWAPFFLHLSLVVL). Residues 270–282 (CPQHPTCGCVFKN) lie on the Extracellular side of the membrane. A helical membrane pass occupies residues 283 to 303 (VNLFLALVICNSIVDPLIYAF). The Cytoplasmic portion of the chain corresponds to 304–320 (RSQELRKTLQEVLQCSW).

Belongs to the G-protein coupled receptor 1 family. As to quaternary structure, interacts with MGRN1, but does not undergo MGRN1-mediated ubiquitination; this interaction competes with GNAS-binding and thus inhibits agonist-induced cAMP production. Interacts with OPN3; the interaction results in a decrease in MC1R-mediated cAMP signaling and ultimately a decrease in melanin production in melanocytes.

It is found in the cell membrane. Functionally, receptor for MSH (alpha, beta and gamma) and ACTH. The activity of this receptor is mediated by G proteins which activate adenylate cyclase. Mediates melanogenesis, the production of eumelanin (black/brown) and phaeomelanin (red/yellow), via regulation of cAMP signaling in melanocytes. In Sus scrofa (Pig), this protein is Melanocyte-stimulating hormone receptor (MC1R).